A 188-amino-acid chain; its full sequence is Putative manganese efflux pump MntP (188 aa).

6 helical membrane passes run 3–23 (LYALLLIALGMSMDAFAVALA), 35–55 (IAATALVFGTVEALTPLAGWV), 70–90 (WAAFVLLGGLGLKMMHEGLSG), 104–126 (WLTVLTAFGTSIDSMIVGVGLAF), 140–160 (MATTVLVAVGLTVGRALGVLF), and 167–187 (AGGLVLIAIGTWTLLSHLGLI).

This sequence belongs to the MntP (TC 9.B.29) family.

The protein resides in the cell inner membrane. Functionally, probably functions as a manganese efflux pump. The protein is Putative manganese efflux pump MntP of Neisseria meningitidis serogroup C / serotype 2a (strain ATCC 700532 / DSM 15464 / FAM18).